The following is a 483-amino-acid chain: CBL-interacting serine/threonine-protein kinase 19 (483 aa).

The Protein kinase domain occupies 28–282 (YEMGRLLGHG…MPDIMETSWF (255 aa)). ATP-binding positions include 34-42 (LGHGTFAKV) and K57. D150 acts as the Proton acceptor in catalysis. The interval 168-197 (DFGLSAVSDQIRQDGLFHTFCGTPAYVAPE) is activation loop. A Phosphoserine modification is found at S172. The residue at position 186 (T186) is a Phosphothreonine. Residues 313 to 322 (SVSGRSSTVS) show a composition bias toward polar residues. Residues 313 to 338 (SVSGRSSTVSEPEDFESFDGRRRGGS) are disordered. Positions 340 to 364 (PRPASLNAFDLISFSPGFDLSGLFE) constitute an NAF domain. Positions 367 to 396 (GEGSRFVSGAPVGQIISKLEEIARIVSFTV) are PPI. The disordered stretch occupies residues 459–483 (NLSSENGQRVSGSRSLPSFLLSDTD).

It belongs to the protein kinase superfamily. CAMK Ser/Thr protein kinase family. SNF1 subfamily. It depends on Mn(2+) as a cofactor.

The catalysed reaction is L-seryl-[protein] + ATP = O-phospho-L-seryl-[protein] + ADP + H(+). The enzyme catalyses L-threonyl-[protein] + ATP = O-phospho-L-threonyl-[protein] + ADP + H(+). Functionally, CIPK serine-threonine protein kinases interact with CBL proteins. Binding of a CBL protein to the regulatory NAF domain of CIPK protein lead to the activation of the kinase in a calcium-dependent manner. The polypeptide is CBL-interacting serine/threonine-protein kinase 19 (CIPK19) (Arabidopsis thaliana (Mouse-ear cress)).